A 282-amino-acid polypeptide reads, in one-letter code: Aminoglycoside 6-adenylyltransferase (282 aa).

The enzyme catalyses streptomycin + ATP = 6-O-adenylylstreptomycin + diphosphate. In terms of biological role, required for streptomycin resistance. Adenylates streptomycin on the O-6 residue. This chain is Aminoglycoside 6-adenylyltransferase, found in Staphylococcus aureus.